The sequence spans 359 residues: Alanine racemase, biosynthetic (359 aa).

Catalysis depends on K34, which acts as the Proton acceptor; specific for D-alanine. Position 34 is an N6-(pyridoxal phosphate)lysine (K34). R129 provides a ligand contact to substrate. Residue Y255 is the Proton acceptor; specific for L-alanine of the active site. Position 303 (M303) interacts with substrate.

Belongs to the alanine racemase family. Monomer but homodimer in the presence of the substrate. Pyridoxal 5'-phosphate serves as cofactor.

It catalyses the reaction L-alanine = D-alanine. It participates in amino-acid biosynthesis; D-alanine biosynthesis; D-alanine from L-alanine: step 1/1. The protein operates within cell wall biogenesis; peptidoglycan biosynthesis. In terms of biological role, catalyzes the interconversion of L-alanine and D-alanine. In Shigella sonnei, this protein is Alanine racemase, biosynthetic (alr).